The sequence spans 450 residues: Trigger factor (450 aa).

The PPIase FKBP-type domain occupies 161-246; the sequence is GDRVVIDFKG…VKTVEAPEYP (86 aa). A disordered region spans residues 422 to 450; the sequence is PMSLQELMSPQQPEAESAEGESKQDETKE. Basic and acidic residues predominate over residues 441-450; sequence GESKQDETKE.

The protein belongs to the FKBP-type PPIase family. Tig subfamily.

The protein localises to the cytoplasm. It catalyses the reaction [protein]-peptidylproline (omega=180) = [protein]-peptidylproline (omega=0). Its function is as follows. Involved in protein export. Acts as a chaperone by maintaining the newly synthesized protein in an open conformation. Functions as a peptidyl-prolyl cis-trans isomerase. This chain is Trigger factor, found in Alkalilimnicola ehrlichii (strain ATCC BAA-1101 / DSM 17681 / MLHE-1).